We begin with the raw amino-acid sequence, 348 residues long: Ethanol acetyltransferase 2 (348 aa).

The N-terminal 19 residues, 1 to 19, are a transit peptide targeting the mitochondrion; sequence MIFNSLSIKRLSSTXTSLP. In terms of domain architecture, AB hydrolase-1 spans 49–305; sequence IIFLHGIYGY…VMKERPQEYI (257 aa). Residues S121, D145, and H294 each act as charge relay system in the active site.

This sequence belongs to the AB hydrolase superfamily.

Its subcellular location is the mitochondrion. It carries out the reaction ethanol + acetyl-CoA = ethyl acetate + CoA. The catalysed reaction is acetyl-CoA + H2O = acetate + CoA + H(+). The enzyme catalyses ethyl acetate + H2O = ethanol + acetate + H(+). Alcohol acetyltransferase that catalyzes the synthesis of ethyl acetate from ethanol and acetyl-CoA. Can also function as a thioesterase by hydrolyzing acetyl-CoA in the absence of ethanol, as well as esterase hydrolyzing ethyl acetate. The sequence is that of Ethanol acetyltransferase 2 (EAT2) from Hanseniaspora uvarum (Yeast).